The following is a 136-amino-acid chain: Large ribosomal subunit protein uL16 (136 aa).

The protein belongs to the universal ribosomal protein uL16 family. As to quaternary structure, part of the 50S ribosomal subunit.

Its function is as follows. Binds 23S rRNA and is also seen to make contacts with the A and possibly P site tRNAs. This is Large ribosomal subunit protein uL16 from Rickettsia massiliae (strain Mtu5).